Here is a 350-residue protein sequence, read N- to C-terminus: FAD:protein FMN transferase (350 aa).

The first 19 residues, 1 to 19 (MDMTFFRAALLGACVLLSG), serve as a signal peptide directing secretion. Residue C20 is the site of N-palmitoyl cysteine attachment. C20 is lipidated: S-diacylglycerol cysteine. FAD contacts are provided by residues M41, W78, 119 to 121 (AMD), and D181. Mg(2+) is bound at residue T184. FAD is bound by residues E187 and I272. Mg(2+) contacts are provided by D298, D301, and T302.

Belongs to the ApbE family. It depends on Mg(2+) as a cofactor.

Its subcellular location is the cell inner membrane. It catalyses the reaction L-threonyl-[protein] + FAD = FMN-L-threonyl-[protein] + AMP + H(+). In terms of biological role, flavin transferase that catalyzes the transfer of the FMN moiety of FAD and its covalent binding to the hydroxyl group of a threonine residue in a target flavoprotein such as NqrB and NqrC, two subunits of the NQR complex. The protein is FAD:protein FMN transferase of Klebsiella pneumoniae (strain 342).